Reading from the N-terminus, the 132-residue chain is T-cell receptor alpha chain V region 2B4 (132 aa).

The N-terminal stretch at 1–20 (MKSLSVSLVVLWLLLNWVNS) is a signal peptide. Positions 21–113 (QQNVQQSPES…SALYLCAVTL (93 aa)) are v segment. Asn-42 carries an N-linked (GlcNAc...) asparagine glycan. Positions 114–117 (YGGS) are d segment. The j segment stretch occupies residues 118–132 (GNKLIFGTGTLLSVK).

The sequence is that of T-cell receptor alpha chain V region 2B4 from Mus musculus (Mouse).